We begin with the raw amino-acid sequence, 149 residues long: MKALFLMGLLALVASAAFAQYGEVVGSYEGGAGGGGAQQCPLGTKLDSCRNYLLDRCTTMKDFPVTWRWWTWWKGGCEELLHDCCSQLSQMPPQCRCNIIQGSIQRDLGGFFGFQRDRTVKVIQAAKNLPPRCNQGPACNIPSTIGYYW.

The signal sequence occupies residues 1–19 (MKALFLMGLLALVASAAFA). Residues 20–28 (QYGEVVGSY) constitute a propeptide that is removed on maturation. Residues 148 to 149 (YW) constitute a propeptide, removed in mature form.

Five disulfide bonds are present. Found in endosperm and aleurone layer of developing kernels, but not in the embryo.

Its subcellular location is the membrane. The protein localises to the secreted. It is found in the extracellular space. Functionally, acts as a membranotoxin, probably through its antibacterial and antifungal activities, contributing to the defense mechanism of the plant against predators. Forms monovalent cation-selective ion channels in membranes. Contributes to grain texture and hardness. In Hordeum vulgare (Barley), this protein is Hordoindoline-A (HINA).